The sequence spans 348 residues: Chloroacetanilide N-alkylformylase, oxygenase component (348 aa).

Positions tryptophan 7–alanine 108 constitute a Rieske domain. [2Fe-2S] cluster-binding residues include cysteine 47, histidine 49, cysteine 66, and histidine 69. 2 residues coordinate Fe cation: histidine 159 and histidine 164. Histidine 250 is a binding site for substrate. Residue aspartate 293 participates in Fe cation binding.

The chloroacetanilide N-alkylformylase multicomponent enzyme system is composed of an oxygenase component (CndA) and an electron transfer component formed by a ferredoxin reductase (CndC1) and a ferredoxin (CndB1). In vitro, chloroacetanilide N-alkylformylase assays in which CndB1 is substituted for CndB2 demonstrate that the two enzymes possess nearly identical activities. The cofactor is [2Fe-2S] cluster.

It carries out the reaction butachlor + 2 reduced [2Fe-2S]-[ferredoxin] + O2 + 2 H(+) = butyl formate + N-(2,6-diethylphenyl)-2-chloroacetamide + 2 oxidized [2Fe-2S]-[ferredoxin] + H2O. It catalyses the reaction alachlor + 2 reduced [2Fe-2S]-[ferredoxin] + O2 + 2 H(+) = methyl formate + N-(2,6-diethylphenyl)-2-chloroacetamide + 2 oxidized [2Fe-2S]-[ferredoxin] + H2O. The enzyme catalyses acetochlor + 2 reduced [2Fe-2S]-[ferredoxin] + O2 + 2 H(+) = N-(2-ethyl-6-methylphenyl)-2-chloroacetamide + ethyl formate + 2 oxidized [2Fe-2S]-[ferredoxin] + H2O. With respect to regulation, activity enhanced by Fe(2+) and Mg(2+) ions. Divalent cations such as Ca(2+), Cr(2+), Co(2+), and Mn(2+) show moderate inhibition of the enzyme, whereas heavy metal ions such as Ag(+), Cu(2+), Pb(2+), Hg(2+), Ni(2+) and Zn(2+) severely inhibit the activity. Its function is as follows. Component of the chloroacetanilide N-alkylformylase multicomponent enzyme system involved in the degradation of chloroacetanilide herbicides (N-alkoxyalkyl-N-chloroacetyl-substituted aniline derivatives). In vitro, catalyzes the N-dealkylation of butachlor, alachlor and acetochlor to yield 2-chloro-N-(2,6-diethylphenyl)acetamide (CDEPA) (for alachlor and butachlor) and 2-chloro-N-(2-methyl-6-ethylphenyl)acetamide (CMEPA) (for acetochlor). The chain is Chloroacetanilide N-alkylformylase, oxygenase component from Rhizorhabdus wittichii (strain DC-6 / KACC 16600) (Sphingomonas wittichii).